Here is a 106-residue protein sequence, read N- to C-terminus: Trp operon repressor homolog (106 aa).

The DNA-binding element occupies 59-82; sequence QREIQQILNTSAATITRGSNMIKI.

This sequence belongs to the TrpR family. In terms of assembly, homodimer.

It is found in the cytoplasm. In terms of biological role, this protein is an aporepressor. When complexed with L-tryptophan it binds the operator region of the trp operon and prevents the initiation of transcription. In Histophilus somni (strain 129Pt) (Haemophilus somnus), this protein is Trp operon repressor homolog.